The primary structure comprises 420 residues: UDP-N-acetylglucosamine 1-carboxyvinyltransferase (420 aa).

Position 22-23 (22-23 (KN)) interacts with phosphoenolpyruvate. A UDP-N-acetyl-alpha-D-glucosamine-binding site is contributed by R94. The active-site Proton donor is the C118. At C118 the chain carries 2-(S-cysteinyl)pyruvic acid O-phosphothioketal. UDP-N-acetyl-alpha-D-glucosamine contacts are provided by D307 and I329.

Belongs to the EPSP synthase family. MurA subfamily.

The protein resides in the cytoplasm. The enzyme catalyses phosphoenolpyruvate + UDP-N-acetyl-alpha-D-glucosamine = UDP-N-acetyl-3-O-(1-carboxyvinyl)-alpha-D-glucosamine + phosphate. The protein operates within cell wall biogenesis; peptidoglycan biosynthesis. Cell wall formation. Adds enolpyruvyl to UDP-N-acetylglucosamine. The protein is UDP-N-acetylglucosamine 1-carboxyvinyltransferase of Gluconacetobacter diazotrophicus (strain ATCC 49037 / DSM 5601 / CCUG 37298 / CIP 103539 / LMG 7603 / PAl5).